Consider the following 91-residue polypeptide: Elongation factor 1-beta (91 aa).

It belongs to the EF-1-beta/EF-1-delta family.

Its function is as follows. Promotes the exchange of GDP for GTP in EF-1-alpha/GDP, thus allowing the regeneration of EF-1-alpha/GTP that could then be used to form the ternary complex EF-1-alpha/GTP/AAtRNA. The polypeptide is Elongation factor 1-beta (Thermofilum pendens (strain DSM 2475 / Hrk 5)).